A 1169-amino-acid chain; its full sequence is Integrin alpha-X (1169 aa).

The N-terminal stretch at 1–19 (MSCTWIAFLLLLGFVSCLG) is a signal peptide. Over 20–1116 (FNLDAEKLTH…EMYKVHNPVP (1097 aa)) the chain is Extracellular. FG-GAP repeat units follow at residues 23–78 (DAEK…NCEP) and 79–138 (ISLQ…QSQN). A disulfide bond links Cys-69 and Cys-76. A glycan (N-linked (GlcNAc...) asparagine) is linked at Asn-89. 2 cysteine pairs are disulfide-bonded: Cys-108/Cys-126 and Cys-116/Cys-146. The 179-residue stretch at 152–330 (DIVFLIDGSG…DALKDIENQL (179 aa)) folds into the VWFA domain. 4 residues coordinate Mg(2+): Asp-158, Ser-160, Ser-162, and Asp-260. N-linked (GlcNAc...) asparagine glycosylation is present at Asn-267. 5 FG-GAP repeats span residues 341-392 (ETPS…PTFI), 393-444 (NMSQ…SRHW), 445-505 (RPKS…GSRW), 508-566 (GTTL…QDIA), and 571-631 (QRIS…FTPA). Asn-393 carries an N-linked (GlcNAc...) asparagine glycan. Ca(2+) contacts are provided by Asp-467, Asp-469, Asp-471, and Asp-475. Cys-496 and Cys-507 are oxidised to a cystine. 7 residues coordinate Ca(2+): Asp-531, Asn-533, Asp-535, Asp-539, Asp-594, Asp-598, and Asp-602. Disulfide bonds link Cys-640–Cys-721 and Cys-656–Cys-711. N-linked (GlcNAc...) asparagine glycosylation is present at Asn-734. Cystine bridges form between Cys-770–Cys-776 and Cys-858–Cys-873. The N-linked (GlcNAc...) asparagine glycan is linked to Asn-949. 2 disulfides stabilise this stretch: Cys-1007–Cys-1031 and Cys-1036–Cys-1041. Asn-1059 and Asn-1084 each carry an N-linked (GlcNAc...) asparagine glycan. The helical transmembrane segment at 1117–1137 (LIVGSSVGGLLLLAIITAILY) threads the bilayer. The Cytoplasmic segment spans residues 1138 to 1169 (KAGFFKRQYKEMLEEANGQFVSDGTPTPQVAQ). The short motif at 1140-1144 (GFFKR) is the GFFKR motif element.

This sequence belongs to the integrin alpha chain family. In terms of assembly, heterodimer of an alpha and a beta subunit. Alpha-X associates with beta-2.

The protein resides in the membrane. Functionally, integrin alpha-X/beta-2 is a receptor for fibrinogen. It recognizes the sequence G-P-R in fibrinogen. It mediates cell-cell interaction during inflammatory responses. It is especially important in monocyte adhesion and chemotaxis. This Mus musculus (Mouse) protein is Integrin alpha-X (Itgax).